The primary structure comprises 692 residues: MNTEIVQKHRVLTKGNPNVTFIKVSIGKRNFLAYIDTGATLCFGKRKISNNWEILKQPKEIIIADKSKHYIREAISNVFLKIENKEFLIPIIYLHDSGLDLIIGNNFLKLYQPFIQRLETIELRWKNLNNPKESQMISTKILTKNEVLKLSFEKIHICLEKYLFFKTIEEQLEEVCSEHPLDETKNKNGLLIEIRLKDPLQEINVTNRIPYTIRDVQEFKEECEDLLKKGLIRESQSPHSAPAFYVENHNEIKRGKRRMVINYKKMNEATIGDSYKLPRKDFILEKIKGSLWFSSLDAKSGYYQLRLHENTKPLTAFSCPPQKHYEWNVLSFGLKQAPSIYQRFMDQSLKGLEHICLAYIDDILIFTKGSKEQHVNDVRIVLQRIKEKGIIISKKKSKLIQQEIEYLGLKIQGNGEIDLSPHTQEKILQFPDELEDRKQIQRFLGCINYIANEGFFKNLALERKHLQKKISVKNPWKWDTIDTKMVQSIKGKIQSLPKLYNASIQDFLIVETDASQHSWSGCLRALPKGKQKIGLDEFGIPTADLCTGSSSASSDNSPAEIDKCHSASKQDTHVASKIKKLENELLLCKYVSGTFTDTETRYPIAELEVLAGVKVLEKWRIDLLQTRFLLRTDSKYFAGFCRYNIKTDYRNGRLIRWQLRLQAYQPYVELIKSENNPFADTLTREWSKPSSS.

Catalysis depends on Asp-36, which acts as the For protease activity. The Reverse transcriptase domain occupies 227–411 (LKKGLIRESQ…QEIEYLGLKI (185 aa)).

It belongs to the caulimoviridae enzymatic polyprotein family.

It catalyses the reaction DNA(n) + a 2'-deoxyribonucleoside 5'-triphosphate = DNA(n+1) + diphosphate. In terms of biological role, encodes for at least two polypeptides: protease (PR) and reverse transcriptase (RT). The protease processes the polyprotein in cis. Reverse transcriptase is multifunctional enzyme that converts the viral RNA genome into dsDNA in viral cytoplasmic capsids. This enzyme displays a DNA polymerase activity that can copy either DNA or RNA templates, and a ribonuclease H (RNase H) activity that cleaves the RNA strand of RNA-DNA heteroduplexes in a partially processive 3'- to 5'-endonucleasic mode. Neo-synthesized pregenomic RNA (pgRNA) are encapsidated, and reverse-transcribed inside the nucleocapsid. Partial (+)DNA is synthesized from the (-)DNA template and generates the relaxed circular DNA (RC-DNA) genome. After budding and infection, the RC-DNA migrates in the nucleus, and is converted into a plasmid-like covalently closed circular DNA (cccDNA). The protein is Enzymatic polyprotein of Soybean chlorotic mottle virus.